Reading from the N-terminus, the 274-residue chain is Large ribosomal subunit protein uL2 (274 aa).

The tract at residues 221 to 256 (RGTAMNPVDHPHGGGEGRNFGKHPVTPWGVPTKGYK) is disordered.

This sequence belongs to the universal ribosomal protein uL2 family. Part of the 50S ribosomal subunit. Forms a bridge to the 30S subunit in the 70S ribosome.

One of the primary rRNA binding proteins. Required for association of the 30S and 50S subunits to form the 70S ribosome, for tRNA binding and peptide bond formation. It has been suggested to have peptidyltransferase activity; this is somewhat controversial. Makes several contacts with the 16S rRNA in the 70S ribosome. The chain is Large ribosomal subunit protein uL2 from Thioalkalivibrio sulfidiphilus (strain HL-EbGR7).